Here is a 373-residue protein sequence, read N- to C-terminus: Malate dehydrogenase, mitochondrial (373 aa).

NAD(+) contacts are provided by residues 69-75 (GAAGGIG) and Asp-95. The substrate site is built by Arg-141 and Arg-147. Residues Asn-154 and 177 to 179 (ISN) contribute to the NAD(+) site. Substrate-binding residues include Asn-179 and Arg-213. His-237 functions as the Proton acceptor in the catalytic mechanism. An NAD(+)-binding site is contributed by Met-288.

It belongs to the LDH/MDH superfamily. MDH type 1 family. As to quaternary structure, homodimer.

The protein localises to the mitochondrion matrix. The enzyme catalyses (S)-malate + NAD(+) = oxaloacetate + NADH + H(+). This is Malate dehydrogenase, mitochondrial from Chlamydomonas reinhardtii (Chlamydomonas smithii).